A 298-amino-acid chain; its full sequence is uncharacterized protein (298 aa).

Residues 194–295 (KRLNTALIAI…QLSPSQYRKS (102 aa)) enclose the HTH araC/xylS-type domain. 2 DNA-binding regions (H-T-H motif) span residues 214–235 (EQLA…QQHI) and 262–285 (VLAI…KNYY).

This is an uncharacterized protein from Haemophilus influenzae (strain ATCC 51907 / DSM 11121 / KW20 / Rd).